The following is a 467-amino-acid chain: UDP-N-acetylmuramate--L-alanine ligase (467 aa).

112-118 (GTHGKTT) serves as a coordination point for ATP.

Belongs to the MurCDEF family.

The protein resides in the cytoplasm. The catalysed reaction is UDP-N-acetyl-alpha-D-muramate + L-alanine + ATP = UDP-N-acetyl-alpha-D-muramoyl-L-alanine + ADP + phosphate + H(+). The protein operates within cell wall biogenesis; peptidoglycan biosynthesis. Functionally, cell wall formation. The protein is UDP-N-acetylmuramate--L-alanine ligase of Polaromonas sp. (strain JS666 / ATCC BAA-500).